A 278-amino-acid polypeptide reads, in one-letter code: MGQKINPHGFRLGITTDWKSRWYADKQYADYIKEDVAIRKLLATGLERAGIADVEIERTRDRVRVDIHTARPGIVIGRRGTEADRIRADLEKLTKKQVQLNILEVKNPESRAQLVAQGVAEQLSNRVAFRRAMRKAIQSAMRQPNVKGIRVQCSGRLGGAEMSRSEFYREGRVPLHTLRADIDYGLYEAKTTFGRIGVKVWIYKGDIVGGKRELAAAAPAGADRPRRERPSGTRPRRSGASGTTATSTDAGRAATEEAPATDAAATAPAAGQPETTES.

In terms of domain architecture, KH type-2 spans 38 to 106 (IRKLLATGLE…QVQLNILEVK (69 aa)). Residues 215 to 278 (AAAAPAGADR…AAGQPETTES (64 aa)) form a disordered region. Low complexity predominate over residues 238–278 (SGASGTTATSTDAGRAATEEAPATDAAATAPAAGQPETTES).

The protein belongs to the universal ribosomal protein uS3 family. Part of the 30S ribosomal subunit. Forms a tight complex with proteins S10 and S14.

Binds the lower part of the 30S subunit head. Binds mRNA in the 70S ribosome, positioning it for translation. The protein is Small ribosomal subunit protein uS3 of Mycolicibacterium gilvum (strain PYR-GCK) (Mycobacterium gilvum (strain PYR-GCK)).